The following is a 400-amino-acid chain: Probable peptidoglycan glycosyltransferase FtsW (400 aa).

Topologically, residues 1 to 29 are cytoplasmic; it reads MVIERIKHLASPLQDWVFTPSPKVMFDRQ. A helical transmembrane segment spans residues 30–50; it reads LIWIALGLMLTGLVMVASASF. Topologically, residues 51–60 are periplasmic; it reads PISTRLTGQP. The chain crosses the membrane as a helical span at residues 61–81; sequence FHFMMRHMLFVFLALSISSIV. Residues 82–95 are Cytoplasmic-facing; it reads LRIELNKWLKYSSH. A helical membrane pass occupies residues 96–116; it reads LLLISLLLLAAVLVVGKSVNG. Over 117–122 the chain is Periplasmic; that stretch reads AARWLP. The helical transmembrane segment at 123 to 143 threads the bilayer; it reads LGIFNLQPAEVAKLSLFVFIA. Residues 144–155 lie on the Cytoplasmic side of the membrane; that stretch reads GYLVRRHGEVRD. The helical transmembrane segment at 156-176 threads the bilayer; it reads SFRGFVKPLLVLITLAFFLLM. Over 177–178 the chain is Periplasmic; it reads QP. A helical membrane pass occupies residues 179-199; sequence DLGTTVVMFVTTIAMLFIAGA. A topological domain (cytoplasmic) is located at residue Lys-200. The chain crosses the membrane as a helical span at residues 201–221; sequence LWQFIALVMGGISLVIVLILA. At 222 to 290 the chain is on the periplasmic side; sequence EPYRMRRVTS…VFAVIAEELG (69 aa). The chain crosses the membrane as a helical span at residues 291–311; that stretch reads FVGVCLVLCLIFALVFKALLI. Over 312–321 the chain is Cytoplasmic; it reads GRKCLAHDQR. Residues 322–342 traverse the membrane as a helical segment; sequence FGGFLAFGIGIWFAFQTLVNV. Residues 343 to 356 are Periplasmic-facing; the sequence is GAAAGIVPTKGLTL. The chain crosses the membrane as a helical span at residues 357 to 377; that stretch reads PLISYGGSSLIIMSVAVSLLI. Over 378 to 400 the chain is Cytoplasmic; the sequence is RIDHECRVYLANEPPRSENEEQK.

It belongs to the SEDS family. FtsW subfamily.

The protein resides in the cell inner membrane. The catalysed reaction is [GlcNAc-(1-&gt;4)-Mur2Ac(oyl-L-Ala-gamma-D-Glu-L-Lys-D-Ala-D-Ala)](n)-di-trans,octa-cis-undecaprenyl diphosphate + beta-D-GlcNAc-(1-&gt;4)-Mur2Ac(oyl-L-Ala-gamma-D-Glu-L-Lys-D-Ala-D-Ala)-di-trans,octa-cis-undecaprenyl diphosphate = [GlcNAc-(1-&gt;4)-Mur2Ac(oyl-L-Ala-gamma-D-Glu-L-Lys-D-Ala-D-Ala)](n+1)-di-trans,octa-cis-undecaprenyl diphosphate + di-trans,octa-cis-undecaprenyl diphosphate + H(+). It participates in cell wall biogenesis; peptidoglycan biosynthesis. Peptidoglycan polymerase that is essential for cell division. This chain is Probable peptidoglycan glycosyltransferase FtsW, found in Aliivibrio salmonicida (strain LFI1238) (Vibrio salmonicida (strain LFI1238)).